A 401-amino-acid chain; its full sequence is Protein IQ-DOMAIN 24 (401 aa).

Residues 1–48 form a disordered region; it reads MGFFGRLFGSKKQEKATPNRRRWSFATRSSHPENDSSSHSSKRRGDED. Residues 105 to 121 are calmodulin-binding; sequence EYKAAMKIQSAFRGYLA. 2 IQ domains span residues 105–133 and 134–156; these read EYKA…ALVK and LQAL…RMQT. Low complexity-rich tracts occupy residues 165–176 and 278–287; these read RASRSSHVSDSS and RSRTGSSSGG. Disordered regions lie at residues 165 to 186 and 258 to 296; these read RASR…IPSS and SPRK…PFTP.

The protein belongs to the IQD family. Binds to multiple calmodulin (CaM) in the presence of Ca(2+) and CaM-like proteins.

Its subcellular location is the nucleus. The protein localises to the nuclear body. It localises to the cell membrane. May be involved in cooperative interactions with calmodulins or calmodulin-like proteins. Recruits calmodulin proteins to microtubules, thus being a potential scaffold in cellular signaling and trafficking. May associate with nucleic acids and regulate gene expression at the transcriptional or post-transcriptional level. The sequence is that of Protein IQ-DOMAIN 24 from Arabidopsis thaliana (Mouse-ear cress).